The primary structure comprises 269 residues: MSGFLDAEAASFAIGGATLLDRIDLRIDRGELIAIVGPNGAGKSTLLRLLSGDLRPTRGAVSLQQRAIHSYAPRELASRRAMLSQHVNVSFPFTVEEVVWMGAGDRGRGTSQSLVDAALHEVGLDAFRDRQLPTLSGGEQQRAHFARVLVQLRCGEVEHGPGLLLLDEPTSSLDLRHQIDLAGTARRCARNGTTVIAILHDINLAARFADRIVVLHQGRLAADGAPSQVIENSLIRRVFDIALVVRTAEDGVPFLLPQMIDAARPQSEG.

The ABC transporter domain maps to 5–242; it reads LDAEAASFAI…SLIRRVFDIA (238 aa). Position 37-44 (37-44) interacts with ATP; sequence GPNGAGKS.

Belongs to the ABC transporter superfamily. Heme (hemin) importer (TC 3.A.1.14.5) family. The complex is composed of two ATP-binding proteins (HmuV), two transmembrane proteins (HmuU) and a solute-binding protein (HmuT).

The protein localises to the cell inner membrane. In terms of biological role, part of the ABC transporter complex HmuTUV involved in hemin import. Responsible for energy coupling to the transport system. The polypeptide is Hemin import ATP-binding protein HmuV (Rhodopseudomonas palustris (strain BisB18)).